The following is a 177-amino-acid chain: Peptide methionine sulfoxide reductase MsrA 2 (177 aa).

Residue C12 is part of the active site.

Belongs to the MsrA Met sulfoxide reductase family.

The enzyme catalyses L-methionyl-[protein] + [thioredoxin]-disulfide + H2O = L-methionyl-(S)-S-oxide-[protein] + [thioredoxin]-dithiol. It carries out the reaction [thioredoxin]-disulfide + L-methionine + H2O = L-methionine (S)-S-oxide + [thioredoxin]-dithiol. Functionally, has an important function as a repair enzyme for proteins that have been inactivated by oxidation. Catalyzes the reversible oxidation-reduction of methionine sulfoxide in proteins to methionine. The sequence is that of Peptide methionine sulfoxide reductase MsrA 2 (msrA2) from Staphylococcus aureus (strain Mu50 / ATCC 700699).